Consider the following 93-residue polypeptide: CRISPR-associated endoribonuclease Cas2 3 (93 aa).

Residue Asp-10 coordinates Mg(2+).

It belongs to the CRISPR-associated endoribonuclease Cas2 protein family. As to quaternary structure, homodimer, forms a heterotetramer with a Cas1 homodimer. Mg(2+) serves as cofactor.

In terms of biological role, CRISPR (clustered regularly interspaced short palindromic repeat), is an adaptive immune system that provides protection against mobile genetic elements (viruses, transposable elements and conjugative plasmids). CRISPR clusters contain sequences complementary to antecedent mobile elements and target invading nucleic acids. CRISPR clusters are transcribed and processed into CRISPR RNA (crRNA). Functions as a ssRNA-specific endoribonuclease. Involved in the integration of spacer DNA into the CRISPR cassette. The polypeptide is CRISPR-associated endoribonuclease Cas2 3 (Chloroflexus aurantiacus (strain ATCC 29366 / DSM 635 / J-10-fl)).